We begin with the raw amino-acid sequence, 279 residues long: Energy-coupling factor transporter ATP-binding protein EcfA1 (279 aa).

An ABC transporter domain is found at 6–240 (LSIEGVSFRY…GSKLERIGLD (235 aa)). 40–47 (GHNGSGKS) is a binding site for ATP.

This sequence belongs to the ABC transporter superfamily. Energy-coupling factor EcfA family. Forms a stable energy-coupling factor (ECF) transporter complex composed of 2 membrane-embedded substrate-binding proteins (S component), 2 ATP-binding proteins (A component) and 2 transmembrane proteins (T component).

Its subcellular location is the cell membrane. Its function is as follows. ATP-binding (A) component of a common energy-coupling factor (ECF) ABC-transporter complex. Unlike classic ABC transporters this ECF transporter provides the energy necessary to transport a number of different substrates. This is Energy-coupling factor transporter ATP-binding protein EcfA1 from Geobacillus kaustophilus (strain HTA426).